The primary structure comprises 131 residues: L-aspartate semialdehyde sulfurtransferase iron-sulfur subunit (131 aa).

2 4Fe-4S ferredoxin-type domains span residues 73 to 102 (KVIK…MDED) and 103 to 131 (YNVV…EIFE). Positions 82, 85, 88, 92, 112, 115, 118, and 122 each coordinate [4Fe-4S] cluster.

In terms of assembly, may form a complex with MJ0100. It depends on [4Fe-4S] cluster as a cofactor.

Its pathway is amino-acid biosynthesis. Its function is as follows. Required for O-acetylhomoserine sulfhydrylase (OAHS)-independent homocysteine (Hcy) biosynthesis. Together with MJ0100, catalyzes the condensation of sulfide with aspartate semialdehyde to generate homocysteine. May be involved in the reduction of the disulfide formed in MJ0100. In Methanocaldococcus jannaschii (strain ATCC 43067 / DSM 2661 / JAL-1 / JCM 10045 / NBRC 100440) (Methanococcus jannaschii), this protein is L-aspartate semialdehyde sulfurtransferase iron-sulfur subunit.